The following is a 366-amino-acid chain: Chorismate synthase (366 aa).

Residues Arg-48 and Arg-54 each coordinate NADP(+). FMN is bound by residues 125 to 127, 238 to 239, Gly-278, 293 to 297, and Arg-319; these read RSS, NA, and KPTSS.

Belongs to the chorismate synthase family. In terms of assembly, homotetramer. The cofactor is FMNH2.

It catalyses the reaction 5-O-(1-carboxyvinyl)-3-phosphoshikimate = chorismate + phosphate. It participates in metabolic intermediate biosynthesis; chorismate biosynthesis; chorismate from D-erythrose 4-phosphate and phosphoenolpyruvate: step 7/7. Catalyzes the anti-1,4-elimination of the C-3 phosphate and the C-6 proR hydrogen from 5-enolpyruvylshikimate-3-phosphate (EPSP) to yield chorismate, which is the branch point compound that serves as the starting substrate for the three terminal pathways of aromatic amino acid biosynthesis. This reaction introduces a second double bond into the aromatic ring system. This is Chorismate synthase from Thiobacillus denitrificans (strain ATCC 25259 / T1).